Consider the following 647-residue polypeptide: Pumilio homolog 3 (647 aa).

Residues 1–10 show a composition bias toward basic residues; that stretch reads MEVKGKKKFT. The segment at 1 to 123 is disordered; that stretch reads MEVKGKKKFT…KKKKELKQSR (123 aa). Lys33 bears the N6-acetyllysine mark. Residues 59-68 show a composition bias toward basic residues; that stretch reads PGKKGVKQFK. Positions 102–123 are enriched in basic and acidic residues; the sequence is SGAKKPKWDDFKKKKKELKQSR. Positions 105 to 117 match the Nuclear localization signal motif; the sequence is KKPKWDDFKKKKK. In terms of domain architecture, PUM-HD spans 142–509; that stretch reads ESLRRKDCDK…VVLDKSACVL (368 aa). 11 Pumilio repeats span residues 176–211, 212–247, 248–276, 288–324, 325–360, 361–396, 397–434, 435–503, 504–550, 551–595, and 596–635; these read HDSTRVIQCFIQYGNEEQRKQAFQELQGDLVELSKA, KYSRNIVKKFLMYGSKPQVAEIIRSFKGHVRKMLRH, SEASAIVEYAYNDKAILEQRNMLTEELYG, PTLDKVLELQPAKLELIMDEMKQILTPMAQKEAVIKH, SLVHKVFLDFFTYAPPKPRSELIEAIREAVVYLAHT, HDGARVAMHCLWHGTPKDRKVIVKTMKTYVEKVANG, QYSHLVLLAAFDCIDDTKLVKQIIISEIISSLPSIVND, KYGR…VVLD, KSAC…VAEH, PAGH…WASI, and NRGAIILSSLLQSCDQEVVNKVKGGLKPLIPTLEKNKSSS.

In terms of assembly, interacts with PARP1 (via catalytic domain). In terms of tissue distribution, in the adult eye, expressed primarily in retinal ganglion cells and, to a lesser extent, in the pigmented cells.

Its subcellular location is the nucleus. The protein resides in the nucleolus. The protein localises to the nucleoplasm. It localises to the chromosome. Functionally, inhibits the poly(ADP-ribosyl)ation activity of PARP1 and the degradation of PARP1 by CASP3 following genotoxic stress. Binds to double-stranded RNA or DNA without sequence specificity. Involved in development of the eye and of primordial germ cells. The protein is Pumilio homolog 3 of Mus musculus (Mouse).